Consider the following 399-residue polypeptide: Elongation factor Tu (399 aa).

The region spanning 10–209 (KPHVNIGTIG…EVDRYIPTPE (200 aa)) is the tr-type G domain. The G1 stretch occupies residues 19 to 26 (GHVDHGKT). 19-26 (GHVDHGKT) contributes to the GTP binding site. Residue threonine 26 coordinates Mg(2+). Residues 60–64 (GITIA) form a G2 region. Positions 81-84 (DCPG) are G3. GTP-binding positions include 81-85 (DCPGH) and 136-139 (NKED). A G4 region spans residues 136-139 (NKED). The interval 174-176 (SAL) is G5.

The protein belongs to the TRAFAC class translation factor GTPase superfamily. Classic translation factor GTPase family. EF-Tu/EF-1A subfamily. In terms of assembly, monomer.

The protein localises to the cytoplasm. The catalysed reaction is GTP + H2O = GDP + phosphate + H(+). Functionally, GTP hydrolase that promotes the GTP-dependent binding of aminoacyl-tRNA to the A-site of ribosomes during protein biosynthesis. The sequence is that of Elongation factor Tu from Wolinella succinogenes (strain ATCC 29543 / DSM 1740 / CCUG 13145 / JCM 31913 / LMG 7466 / NCTC 11488 / FDC 602W) (Vibrio succinogenes).